A 715-amino-acid chain; its full sequence is Solute carrier organic anion transporter family member 1C1 (715 aa).

Residues 1–43 (MDTSSKENAHLFHKNSAQPAGGPSFTVGYPSTEEARPCCGKLK) are Cytoplasmic-facing. A helical membrane pass occupies residues 44–63 (VFLGALSFVYFAKALAEGYL). Over 64 to 82 (KSTVTQIERRFEIPSSLVG) the chain is Extracellular. The chain crosses the membrane as a helical span at residues 83-103 (IIDGSFEIGNLLVITFVSYFG). Over 104–109 (AKLHRP) the chain is Cytoplasmic. A helical membrane pass occupies residues 110 to 134 (KIIGAGCLVMGFGTMLIAVPQFFME). At 135–187 (KYSYEKYERYSPSSNVTPSISPCYLESSSPSPSSILGKSQNKISHECVGDSSS) the chain is on the extracellular side. A helical transmembrane segment spans residues 188–216 (SMWVYVFLGNLLRGLGETPIQPLGIAYLD). At 217–235 (DFASEDNAAFYIGCVQTVA) the chain is on the cytoplasmic side. A helical transmembrane segment spans residues 236–256 (IIGPIFGFLLGSLCAKLYVDI). The Extracellular segment spans residues 257-274 (GFVNLDHITITPKDPQWV). Residues 275–299 (GAWWLGYLIAGFLSLLAAVPFWCLP) form a helical membrane-spanning segment. Residues 300–351 (KTLPRSQSRENSGSTSEKSKFIDDPIHYQMAPGDDKMKIMEMAKDFLPSLKT) are Cytoplasmic-facing. Residues 352-373 (LFRNPVYILYLCASTVQFNSLF) form a helical membrane-spanning segment. At 374–393 (GMVTYKPKYIEQQYGQSSSK) the chain is on the extracellular side. The helical transmembrane segment at 394–417 (ANFVIGLINIPAVALGIFSGGIVM) threads the bilayer. Residues 418-421 (KKFR) are Cytoplasmic-facing. Residues 422–445 (LGICEATKLYLGSSVFGYLLFLSL) form a helical membrane-spanning segment. The Extracellular segment spans residues 446–557 (FALGCENSSV…NGCSQMFLYF (112 aa)). An N-linked (GlcNAc...) asparagine glycan is attached at asparagine 452. The region spanning 473–528 (RALFSDCNSRCKCSDSKWEPMCGDNGITYVSACLAGCQSSSRSGKNIIFSNCTCVG) is the Kazal-like domain. 3 disulfide bridges follow: cysteine 479-cysteine 509, cysteine 485-cysteine 505, and cysteine 494-cysteine 526. Residues asparagine 523 and asparagine 536 are each glycosylated (N-linked (GlcNAc...) asparagine). A helical transmembrane segment spans residues 558-580 (LVISVITSYTLSLGGIPGYILLL). The Cytoplasmic portion of the chain corresponds to 581 to 589 (RCIQPQLKS). Residues 590–615 (FALGIYTLAVRVLAGIPAPVYFGVLI) traverse the membrane as a helical segment. Over 616–649 (DTSCLKWGFKKCGSRGSCRLYDSHAFRHIYLGLT) the chain is Extracellular. The helical transmembrane segment at 650–667 (TLLGTVSVFLSMAVLFVL) threads the bilayer. Residues 668 to 715 (KKKYVSKHSSLITTREKIGMSSSIKKETCAARDRGLQPKYWPGKETRL) are Cytoplasmic-facing.

The protein belongs to the organo anion transporter (TC 2.A.60) family. In terms of tissue distribution, widely expressed throughout the brain except in the cerebellum. Not detected in kidney, heart, lung, skeletal muscle, spleen, liver, nor testis. Highly expressed in cerebral microvessels throughout the brain and in the choroid plexus (at mRNA and protein level).

The protein localises to the cell membrane. It carries out the reaction 3,3',5'-triiodo-L-thyronine(out) = 3,3',5'-triiodo-L-thyronine(in). It catalyses the reaction L-thyroxine(out) = L-thyroxine(in). The catalysed reaction is L-thyroxine sulfate(out) = L-thyroxine sulfate(in). The enzyme catalyses 17beta-estradiol 17-O-(beta-D-glucuronate)(out) = 17beta-estradiol 17-O-(beta-D-glucuronate)(in). It carries out the reaction 3,3',5-triiodo-L-thyronine(out) = 3,3',5-triiodo-L-thyronine(in). Functionally, mediates the Na(+)-independent high affinity transport of thyroid hormones at the plasma membrane of brain capillary endothelial cells. The transport activity of substrates L-thyroxine (T4) and 3,3',5'-triiodo-L-thyronine (reverse T3, rT3) is much greater than that of 3,3',5-triiodo-L-thyronine (T3). The prehormone, T4, is the major form in the circulating blood and is converted to the active form, T3, by the iodothyronine-deiodinase in peripheral organs. T3 plays an essential role in brain development via binding to specific nuclear receptors (thyroid hormone receptor). Also transports organic anions such as the conjugated steroid 17-beta-glucuronosyl estradiol (17beta-estradiol 17-O-(beta-D-glucuronate)). Transports T4 and estrone-3-sulfate in a pH-insensitive manner. May serve as a drug efflux system at the blood brain barrier. The protein is Solute carrier organic anion transporter family member 1C1 (Slco1c1) of Mus musculus (Mouse).